The primary structure comprises 107 residues: Envelope small membrane protein (107 aa).

The Virion surface portion of the chain corresponds to 1 to 11; the sequence is MMNLVNKSLEE. Residues 12-32 traverse the membrane as a helical segment; that stretch reads NGSFLTAVYIFCAFVALYLLG. Residues 33–107 lie on the Intravirion side of the membrane; that stretch reads RALHAFVQAA…NFQNDGKLHS (75 aa).

It belongs to the gammacoronaviruses E protein family. Homooligomer. Interacts with the M membrane protein in the budding compartment of the host cell, which is located between endoplasmic reticulum and the Golgi complex. The cytoplasmic tails of both proteins are important for this function. Interacts with Nucleoprotein.

It localises to the host Golgi apparatus membrane. Functionally, plays a central role in virus morphogenesis and assembly. Acts as a viroporin and self-assembles in host membranes forming pentameric protein-lipid pores that allow ion transport. Also plays a role in the induction of apoptosis. The sequence is that of Envelope small membrane protein from Gallus gallus (Chicken).